The primary structure comprises 199 residues: MDINMTRIYLASRSPRRAELLHQIGVAFVIIPSDIDESVYNAELAEDYVLRLARGKAQSCCARLPALDMPVLAADTTVCVDGKILGKPESDTEACAMLASMSGRWHEVHTAIAVASRDGTEVALSTTRVKMAALSRDVIAAYVSTGEPRDKAGAYGIQGLGGTLIERIEGSYSGVMGLPLFETAKLLRNCGVAIPGTQD.

The Proton acceptor role is filled by D75.

It belongs to the Maf family. YhdE subfamily. A divalent metal cation is required as a cofactor.

The protein resides in the cytoplasm. The enzyme catalyses dTTP + H2O = dTMP + diphosphate + H(+). It catalyses the reaction UTP + H2O = UMP + diphosphate + H(+). In terms of biological role, nucleoside triphosphate pyrophosphatase that hydrolyzes dTTP and UTP. May have a dual role in cell division arrest and in preventing the incorporation of modified nucleotides into cellular nucleic acids. This Methylobacillus flagellatus (strain ATCC 51484 / DSM 6875 / VKM B-1610 / KT) protein is dTTP/UTP pyrophosphatase.